A 139-amino-acid polypeptide reads, in one-letter code: Small ribosomal subunit protein bS6 (139 aa).

Belongs to the bacterial ribosomal protein bS6 family.

Functionally, binds together with bS18 to 16S ribosomal RNA. This is Small ribosomal subunit protein bS6 from Borreliella afzelii (strain PKo) (Borrelia afzelii).